A 291-amino-acid polypeptide reads, in one-letter code: N-acetylmannosamine kinase (291 aa).

ATP-binding positions include Ala-5 to Lys-12 and Gly-132 to Ser-139. Zn(2+)-binding residues include His-156, Cys-166, Cys-168, and Cys-173.

It belongs to the ROK (NagC/XylR) family. NanK subfamily. As to quaternary structure, homodimer.

The catalysed reaction is an N-acyl-D-mannosamine + ATP = an N-acyl-D-mannosamine 6-phosphate + ADP + H(+). It functions in the pathway amino-sugar metabolism; N-acetylneuraminate degradation; D-fructose 6-phosphate from N-acetylneuraminate: step 2/5. Functionally, catalyzes the phosphorylation of N-acetylmannosamine (ManNAc) to ManNAc-6-P. In Escherichia coli (strain ATCC 8739 / DSM 1576 / NBRC 3972 / NCIMB 8545 / WDCM 00012 / Crooks), this protein is N-acetylmannosamine kinase.